A 219-amino-acid polypeptide reads, in one-letter code: Hemolysin-3 (219 aa).

Helical transmembrane passes span Ala19 to His39, Val49 to Leu69, Ile83 to Ile103, Thr112 to Val132, Ala138 to Tyr158, Gly165 to Trp185, and Ile194 to Val214.

Belongs to the UPF0073 (Hly-III) family.

It localises to the cell membrane. In terms of biological role, might be virulent against a mammalian host; when expressed in E.coli, the soluble extract has hemolytic activity on human erythrocytes. The activity is not inhibited by cholesterol or activated by 2-mercaptoethanol. Might be pore-forming protein. Its in vivo role in virulence is untested, nor has it been shown to be secreted by B.cereus. This chain is Hemolysin-3, found in Bacillus cereus.